We begin with the raw amino-acid sequence, 760 residues long: MATRGGGGGGGGKEAKGKVMGPLFPRLHVNDAAKGGGPRAPPRNKMALYEQFTVPSHRFSGGGGGGGVGGSPAHSTSAASQSQSQSQVYGRDSSLFQPFNVPSNRPGHSTEKINSDKINKKISGSRKELGMLSSQTKGMDIYASRSTAEAPQRRAENTIKSSSGKRLADDDEFMVPSVFNSRFPQYSTQENAGVQDQSTPLVAANPHKSPSTVSKSSTKCYNTVSKKLERIHVSDVKSRTPLKDKEMEAAQTSKNVEVEKSSSFHASKDMFESRHAKVYPKMDKTGIINDSDEPHGGNSGHQATSRNGGSMKFQNPPMRRNEISSNPSSENTDRHYNLPQGGIEETGTKRKRLLEQHDAEKSDDVSRLLEQHDAENIDDVSDSSVECITGWEISPDKIVGAIGTKHFWKARRAIMNQQRVFAVQVFELHKLVKVQKLIAASPHVLIESDPCLGNALLGSKNKLVEENLKAQPLLVATIDDVEPSLQQPEVSKENTEDSPPSPHDTGLGSGQRDQAATNGVSKSNRRATPVASDNKQNNWGVQLQPPQNQWLVPVMSPLEGLVYKPYSGPCPPAGSILAPFYANCTPLSLPSTAGDFMNSAYGVPMPHQPQHMGAPGPPSMPMNYFPPFSIPVMNPTAPAPVVEQGRHPSMPQPYGNFEQQSWISCNMSHPSGIWRFHASRDSEAQASSASSPFDRFQCSGSGPVSAFPTVSAQNNQPQPSYSSRDNQTNVIKVVPHNSRTASESAARIFRSIQMERQRDD.

Composition is skewed to gly residues over residues 1 to 12 (MATRGGGGGGGG) and 60 to 70 (SGGGGGGGVGG). 4 disordered regions span residues 1-120 (MATR…KINK), 144-169 (SRST…RLAD), 236-262 (VKSR…EKSS), and 285-346 (TGII…IEET). Low complexity predominate over residues 71 to 87 (SPAHSTSAASQSQSQSQ). The span at 94-107 (SLFQPFNVPSNRPG) shows a compositional bias: polar residues. Residues 108-120 (HSTEKINSDKINK) are compositionally biased toward basic and acidic residues. A compositionally biased stretch (basic and acidic residues) spans 236-248 (VKSRTPLKDKEME). Positions 349–355 (KRKRLLE) match the Nuclear localization signal motif. Disordered regions lie at residues 485 to 543 (LQQP…GVQL) and 707 to 760 (FPTV…QRDD). 3 stretches are compositionally biased toward polar residues: residues 511-522 (QRDQAATNGVSK), 531-543 (ASDN…GVQL), and 707-730 (FPTV…QTNV).

In terms of tissue distribution, expressed in mesophyll cells of young leaves, anthers, stigmas and the top of lemmas.

The protein localises to the nucleus. Functionally, involved in the regulation of flowering time under short day (SD) and long day (LD) conditions. Functions as a floral promoter by negatively regulating GHD7, a repressor of the photoperiodic control of flowering. Acts as a floral activator in the LD photoperiodic pathway. Involved in blue light-induced activation of EHD1 expression to promote flowering under SD conditions. The sequence is that of Protein HEADING DATE 3B (HD3B) from Oryza sativa subsp. japonica (Rice).